A 260-amino-acid polypeptide reads, in one-letter code: Acetylglutamate kinase (260 aa).

Residues 46–47, Arg68, and Asn160 each bind substrate; that span reads GG.

This sequence belongs to the acetylglutamate kinase family. ArgB subfamily.

The protein localises to the cytoplasm. The catalysed reaction is N-acetyl-L-glutamate + ATP = N-acetyl-L-glutamyl 5-phosphate + ADP. It participates in amino-acid biosynthesis; L-arginine biosynthesis; N(2)-acetyl-L-ornithine from L-glutamate: step 2/4. Catalyzes the ATP-dependent phosphorylation of N-acetyl-L-glutamate. The sequence is that of Acetylglutamate kinase from Shewanella putrefaciens (strain CN-32 / ATCC BAA-453).